The chain runs to 370 residues: Protein TEEBE (370 aa).

Residues 1–21 form the signal peptide; that stretch reads MSLYHSLSIFLLLSLCHGSYS. The N-linked (GlcNAc...) asparagine glycan is linked to asparagine 215.

In terms of tissue distribution, expressed in primary and lateral roots, stigmatic papillae and hypocotyls.

Its subcellular location is the secreted. It localises to the cell wall. Its function is as follows. Prevents hypocotyl epidermal cells elongation by modulating the pectin status in cell walls. Likely regulates pectin methylesterification degree during cell separation and elongation, including upon root-knot nematode Meloidogyne incognita infection. The protein is Protein TEEBE of Arabidopsis thaliana (Mouse-ear cress).